Reading from the N-terminus, the 250-residue chain is 3-deoxy-manno-octulosonate cytidylyltransferase (250 aa).

Belongs to the KdsB family.

Its subcellular location is the cytoplasm. It carries out the reaction 3-deoxy-alpha-D-manno-oct-2-ulosonate + CTP = CMP-3-deoxy-beta-D-manno-octulosonate + diphosphate. The protein operates within nucleotide-sugar biosynthesis; CMP-3-deoxy-D-manno-octulosonate biosynthesis; CMP-3-deoxy-D-manno-octulosonate from 3-deoxy-D-manno-octulosonate and CTP: step 1/1. Its pathway is bacterial outer membrane biogenesis; lipopolysaccharide biosynthesis. Activates KDO (a required 8-carbon sugar) for incorporation into bacterial lipopolysaccharide in Gram-negative bacteria. In Xanthomonas campestris pv. campestris (strain 8004), this protein is 3-deoxy-manno-octulosonate cytidylyltransferase.